Here is a 323-residue protein sequence, read N- to C-terminus: Ribose-phosphate pyrophosphokinase 2 (323 aa).

ATP-binding positions include 43 to 45 (DGE) and 102 to 103 (RQ). Mg(2+) contacts are provided by His-136 and Asp-177. Lys-200 is a catalytic residue. Residues Arg-202, Asp-226, and 230–234 (DTAGT) contribute to the D-ribose 5-phosphate site.

The protein belongs to the ribose-phosphate pyrophosphokinase family. Class I subfamily. Homohexamer. The cofactor is Mg(2+).

It is found in the cytoplasm. The enzyme catalyses D-ribose 5-phosphate + ATP = 5-phospho-alpha-D-ribose 1-diphosphate + AMP + H(+). It participates in metabolic intermediate biosynthesis; 5-phospho-alpha-D-ribose 1-diphosphate biosynthesis; 5-phospho-alpha-D-ribose 1-diphosphate from D-ribose 5-phosphate (route I): step 1/1. Functionally, involved in the biosynthesis of the central metabolite phospho-alpha-D-ribosyl-1-pyrophosphate (PRPP) via the transfer of pyrophosphoryl group from ATP to 1-hydroxyl of ribose-5-phosphate (Rib-5-P). In Enterococcus faecalis (strain ATCC 700802 / V583), this protein is Ribose-phosphate pyrophosphokinase 2.